The sequence spans 257 residues: uncharacterized protein (257 aa).

Disordered regions lie at residues methionine 1–cysteine 164 and threonine 225–alanine 257. Over residues cysteine 10–lysine 28 the composition is skewed to basic and acidic residues. Residues arginine 54–serine 65 show a composition bias toward basic residues. Residues arginine 125 to alanine 139 show a composition bias toward pro residues. Basic residues predominate over residues arginine 144–glycine 162.

This is an uncharacterized protein from Homo sapiens (Human).